The sequence spans 285 residues: 4-diphosphocytidyl-2-C-methyl-D-erythritol kinase (285 aa).

The active site involves lysine 11. Position 93-103 (93-103 (PLAAGLAGGSA)) interacts with ATP. Aspartate 135 is a catalytic residue.

The protein belongs to the GHMP kinase family. IspE subfamily.

It carries out the reaction 4-CDP-2-C-methyl-D-erythritol + ATP = 4-CDP-2-C-methyl-D-erythritol 2-phosphate + ADP + H(+). It participates in isoprenoid biosynthesis; isopentenyl diphosphate biosynthesis via DXP pathway; isopentenyl diphosphate from 1-deoxy-D-xylulose 5-phosphate: step 3/6. Catalyzes the phosphorylation of the position 2 hydroxy group of 4-diphosphocytidyl-2C-methyl-D-erythritol. The protein is 4-diphosphocytidyl-2-C-methyl-D-erythritol kinase of Moorella thermoacetica (strain ATCC 39073 / JCM 9320).